A 562-amino-acid chain; its full sequence is Sulfite reductase [NADPH] hemoprotein beta-component (562 aa).

[4Fe-4S] cluster-binding residues include Cys428, Cys434, Cys473, and Cys477. Cys477 contacts siroheme.

The protein belongs to the nitrite and sulfite reductase 4Fe-4S domain family. In terms of assembly, alpha(8)-beta(8). The alpha component is a flavoprotein, the beta component is a hemoprotein. Requires siroheme as cofactor. The cofactor is [4Fe-4S] cluster.

The enzyme catalyses hydrogen sulfide + 3 NADP(+) + 3 H2O = sulfite + 3 NADPH + 4 H(+). It functions in the pathway sulfur metabolism; hydrogen sulfide biosynthesis; hydrogen sulfide from sulfite (NADPH route): step 1/1. Functionally, component of the sulfite reductase complex that catalyzes the 6-electron reduction of sulfite to sulfide. This is one of several activities required for the biosynthesis of L-cysteine from sulfate. This Myxococcus xanthus (strain DK1622) protein is Sulfite reductase [NADPH] hemoprotein beta-component.